The primary structure comprises 67 residues: ATP synthase protein 8 (67 aa).

Residues 8–24 (TWFITITSMTITLFIMF) form a helical membrane-spanning segment. Residue lysine 54 is modified to N6-acetyllysine; alternate. Lysine 54 bears the N6-succinyllysine; alternate mark. N6-acetyllysine is present on lysine 57.

Belongs to the ATPase protein 8 family. In terms of assembly, F-type ATPases have 2 components, CF(1) - the catalytic core - and CF(0) - the membrane proton channel. Component of an ATP synthase complex composed of ATP5PB, ATP5MC1, ATP5F1E, ATP5PD, ATP5ME, ATP5PF, ATP5MF, MT-ATP6, MT-ATP8, ATP5F1A, ATP5F1B, ATP5F1D, ATP5F1C, ATP5PO, ATP5MG, ATP5MK and ATP5MJ. Interacts with PRICKLE3.

It localises to the mitochondrion membrane. In terms of biological role, mitochondrial membrane ATP synthase (F(1)F(0) ATP synthase or Complex V) produces ATP from ADP in the presence of a proton gradient across the membrane which is generated by electron transport complexes of the respiratory chain. F-type ATPases consist of two structural domains, F(1) - containing the extramembraneous catalytic core and F(0) - containing the membrane proton channel, linked together by a central stalk and a peripheral stalk. During catalysis, ATP synthesis in the catalytic domain of F(1) is coupled via a rotary mechanism of the central stalk subunits to proton translocation. Part of the complex F(0) domain. Minor subunit located with subunit a in the membrane. In Rhinoceros unicornis (Greater Indian rhinoceros), this protein is ATP synthase protein 8 (MT-ATP8).